Here is a 262-residue protein sequence, read N- to C-terminus: Cap-specific mRNA (nucleoside-2'-O-)-methyltransferase (262 aa).

In terms of domain architecture, RrmJ-type SAM-dependent 2'-O-MTase spans 34 to 226 (TRRPRCWRKL…ERYLICFNKL (193 aa)). S-adenosyl-L-methionine is bound by residues Gly-67 and Asp-140. The Proton acceptor role is filled by Lys-180.

It catalyses the reaction a 5'-end (N(7)-methyl 5'-triphosphoguanosine)-ribonucleoside in mRNA + S-adenosyl-L-methionine = a 5'-end (N(7)-methyl 5'-triphosphoguanosine)-(2'-O-methyl-ribonucleoside) in mRNA + S-adenosyl-L-homocysteine + H(+). Its function is as follows. S-adenosyl-L-methionine-dependent methyltransferase that mediates mRNA cap 2'-O-ribose methylation to the 5'-cap structure of late viral transcripts. This chain is Cap-specific mRNA (nucleoside-2'-O-)-methyltransferase, found in Lepidoptera (butterflies and moths).